A 530-amino-acid polypeptide reads, in one-letter code: Chaperone Ric-8A (530 aa).

A Phosphoserine modification is found at S435. Phosphothreonine is present on residues T440 and T442. Phosphoserine is present on residues S501, S522, S523, and S527.

It belongs to the synembryn family. As to quaternary structure, interacts with GDP-bound G alpha proteins GNAI1, GNAO1 and GNAQ, and with GNA13 with lower affinity. Does not interact with G-alpha proteins when they are in complex with subunits beta and gamma. Interacts (via C-terminus) with RGS14; the interaction stimulates the dissociation of the complex between RGS14 and the active GTP-bound form of GNAI1. Interacts with NCS1; interaction is favored in the absence of Ca(2+) and myristoylation of NCS1 is not required. Phosphorylated at Ser-435 and Thr-440 by CK2, stabilizing its interface with G alpha proteins.

It localises to the cytoplasm. Its subcellular location is the cell cortex. In terms of biological role, chaperone that specifically binds and folds nascent G alpha proteins prior to G protein heterotrimer formation, promoting their stability and activity: folds GNAI1, GNAO1, GNA13 and GNAQ. Does not fold G(s) G-alpha proteins GNAS nor GNAL. Also acts as a guanine nucleotide exchange factor (GEF) for G alpha proteins by stimulating exchange of bound GDP for free GTP. Involved in regulation of microtubule pulling forces during mitotic movement of chromosomes by stimulating G(i)-alpha protein (GNAI1), possibly leading to release G(i)-alpha-GTP and NuMA proteins from the NuMA-GPSM2-G(i)-alpha-GDP complex. Also acts as an activator for G(q)-alpha (GNAQ) protein by enhancing the G(q)-coupled receptor-mediated ERK activation. This Bos taurus (Bovine) protein is Chaperone Ric-8A (RIC8A).